The sequence spans 611 residues: Endo-1,4-beta-xylanase A (611 aa).

The signal sequence occupies residues 1 to 26 (MRTAMAKSLGAAAFLGAALFAHTLAA). In terms of domain architecture, CBM2 spans 27–128 (QTATCSYNIT…SVGGSICSGS (102 aa)). 3 disulfide bridges follow: cysteine 31–cysteine 125, cysteine 184–cysteine 215, and cysteine 194–cysteine 209. In terms of domain architecture, CBM10 spans 183-212 (QCNWYGTLYPLCVTTTNGWGWEDQRSCIAR). In terms of domain architecture, GH10 spans 281–607 (SGGNADIFTS…KPAYQGVVEA (327 aa)). The active-site Proton donor is the glutamate 391. Glutamate 510 functions as the Nucleophile in the catalytic mechanism.

The protein belongs to the glycosyl hydrolase 10 (cellulase F) family.

It carries out the reaction Endohydrolysis of (1-&gt;4)-beta-D-xylosidic linkages in xylans.. The protein operates within glycan degradation; xylan degradation. The sequence is that of Endo-1,4-beta-xylanase A (xynA) from Cellvibrio japonicus (strain Ueda107) (Pseudomonas fluorescens subsp. cellulosa).